The chain runs to 311 residues: Formimidoylglutamase (311 aa).

Residues His-130, Asp-155, His-157, Asp-159, Cys-242, and Asp-244 each coordinate Mn(2+).

It belongs to the arginase family. Mn(2+) is required as a cofactor.

It carries out the reaction N-formimidoyl-L-glutamate + H2O = formamide + L-glutamate. Its pathway is amino-acid degradation; L-histidine degradation into L-glutamate; L-glutamate from N-formimidoyl-L-glutamate (hydrolase route): step 1/1. Functionally, catalyzes the conversion of N-formimidoyl-L-glutamate to L-glutamate and formamide. The chain is Formimidoylglutamase from Staphylococcus aureus (strain bovine RF122 / ET3-1).